The sequence spans 251 residues: NAD kinase (251 aa).

Asp-51 acts as the Proton acceptor in catalysis. NAD(+)-binding positions include 51–52, Lys-56, 113–114, Lys-124, His-140, Asp-142, 153–158, and Ala-177; these read DG, NE, and TGYSLS.

It belongs to the NAD kinase family. It depends on a divalent metal cation as a cofactor.

It is found in the cytoplasm. The catalysed reaction is NAD(+) + ATP = ADP + NADP(+) + H(+). Its function is as follows. Involved in the regulation of the intracellular balance of NAD and NADP, and is a key enzyme in the biosynthesis of NADP. Catalyzes specifically the phosphorylation on 2'-hydroxyl of the adenosine moiety of NAD to yield NADP. In Thermosipho melanesiensis (strain DSM 12029 / CIP 104789 / BI429), this protein is NAD kinase.